Here is a 253-residue protein sequence, read N- to C-terminus: 5'-nucleotidase SurE (253 aa).

4 residues coordinate a divalent metal cation: Asp-8, Asp-9, Ser-39, and Asn-91.

This sequence belongs to the SurE nucleotidase family. A divalent metal cation is required as a cofactor.

It is found in the cytoplasm. The catalysed reaction is a ribonucleoside 5'-phosphate + H2O = a ribonucleoside + phosphate. Its function is as follows. Nucleotidase that shows phosphatase activity on nucleoside 5'-monophosphates. This chain is 5'-nucleotidase SurE, found in Leptothrix cholodnii (strain ATCC 51168 / LMG 8142 / SP-6) (Leptothrix discophora (strain SP-6)).